Reading from the N-terminus, the 264-residue chain is 5'-nucleotidase SurE (264 aa).

Aspartate 10, aspartate 11, serine 43, and asparagine 99 together coordinate a divalent metal cation.

Belongs to the SurE nucleotidase family. A divalent metal cation serves as cofactor.

It localises to the cytoplasm. The catalysed reaction is a ribonucleoside 5'-phosphate + H2O = a ribonucleoside + phosphate. Functionally, nucleotidase that shows phosphatase activity on nucleoside 5'-monophosphates. In Methanococcus vannielii (strain ATCC 35089 / DSM 1224 / JCM 13029 / OCM 148 / SB), this protein is 5'-nucleotidase SurE.